Reading from the N-terminus, the 185-residue chain is Ribosome maturation factor RimP (185 aa).

This sequence belongs to the RimP family.

The protein resides in the cytoplasm. Required for maturation of 30S ribosomal subunits. The chain is Ribosome maturation factor RimP from Magnetococcus marinus (strain ATCC BAA-1437 / JCM 17883 / MC-1).